The following is a 73-amino-acid chain: UPF0154 protein LGAS_0795 (73 aa).

A helical membrane pass occupies residues Leu-3 to Tyr-23.

The protein belongs to the UPF0154 family.

Its subcellular location is the cell membrane. The sequence is that of UPF0154 protein LGAS_0795 from Lactobacillus gasseri (strain ATCC 33323 / DSM 20243 / BCRC 14619 / CIP 102991 / JCM 1131 / KCTC 3163 / NCIMB 11718 / NCTC 13722 / AM63).